The primary structure comprises 386 residues: DNA replication and repair protein RecF (386 aa).

Residue 30-37 (GANAQGKT) coordinates ATP.

This sequence belongs to the RecF family.

It localises to the cytoplasm. Its function is as follows. The RecF protein is involved in DNA metabolism; it is required for DNA replication and normal SOS inducibility. RecF binds preferentially to single-stranded, linear DNA. It also seems to bind ATP. The sequence is that of DNA replication and repair protein RecF from Natranaerobius thermophilus (strain ATCC BAA-1301 / DSM 18059 / JW/NM-WN-LF).